The primary structure comprises 228 residues: Uracil-DNA glycosylase (228 aa).

Asp64 (proton acceptor) is an active-site residue.

It belongs to the uracil-DNA glycosylase (UDG) superfamily. UNG family.

The protein localises to the cytoplasm. It carries out the reaction Hydrolyzes single-stranded DNA or mismatched double-stranded DNA and polynucleotides, releasing free uracil.. Its function is as follows. Excises uracil residues from the DNA which can arise as a result of misincorporation of dUMP residues by DNA polymerase or due to deamination of cytosine. The sequence is that of Uracil-DNA glycosylase from Yersinia enterocolitica serotype O:8 / biotype 1B (strain NCTC 13174 / 8081).